Here is a 284-residue protein sequence, read N- to C-terminus: MASLQRKGLQARILTSEEEEKLKRDQTLVSDFKQQKLEQEAQKNWDLFYKRNSTNFFKDRHWTTREFEELRSCREFEDQKLTMLEAGCGVGNCLFPLLEEDPNIFAYACDFSPRAIEYVKQNPLYDTERCKVFQCDLTKDDLLDHVPPESVDVVMLIFVLSAVHPDKMHLVLQNIYKVLKPGKSVLFRDYGLYDHAMLRFKASSKLGENFYVRQDGTRSYFFTDDFLAQLFMDTGYEEVVNEYVFRETVNKKEGLCVPRVFLQSKFLKPPKNPSPVVLGLDPKS.

The S-adenosyl-L-methionine site is built by W45 and Y49. Positions 49, 61, 85, 87, 110, 136, 137, and 157 each coordinate S-adenosyl-L-homocysteine. Positions 87, 110, 136, 137, and 157 each coordinate S-adenosyl-L-methionine.

This sequence belongs to the methyltransferase superfamily. METL family. In terms of assembly, monomer. Interacts with SARS1/SerRS; interaction is mediated via tRNA(Ser) and is required for N(3)-methylcytidine methylation.

The protein localises to the cytoplasm. It is found in the nucleus. It catalyses the reaction cytidine(32) in tRNA(Ser) + S-adenosyl-L-methionine = N(3)-methylcytidine(32) in tRNA(Ser) + S-adenosyl-L-homocysteine + H(+). In terms of biological role, S-adenosyl-L-methionine-dependent methyltransferase that mediates N(3)-methylcytidine modification of residue 32 of the tRNA anticodon loop of tRNA(Ser), including tRNA(Ser)(UGA) and tRNA(Ser)(GCU). Interaction with SARS1/SerRS is required for N(3)-methylcytidine methylation. This is tRNA N(3)-cytidine methyltransferase METTL6 from Homo sapiens (Human).